The chain runs to 156 residues: Ribosomal RNA large subunit methyltransferase H (156 aa).

Residues Leu73, Gly104, and 123-128 each bind S-adenosyl-L-methionine; that span reads LSALTL.

The protein belongs to the RNA methyltransferase RlmH family. In terms of assembly, homodimer.

The protein localises to the cytoplasm. The enzyme catalyses pseudouridine(1915) in 23S rRNA + S-adenosyl-L-methionine = N(3)-methylpseudouridine(1915) in 23S rRNA + S-adenosyl-L-homocysteine + H(+). Specifically methylates the pseudouridine at position 1915 (m3Psi1915) in 23S rRNA. The protein is Ribosomal RNA large subunit methyltransferase H of Shewanella sediminis (strain HAW-EB3).